A 265-amino-acid chain; its full sequence is Sulfur carrier protein FdhD (265 aa).

Residue Cys107 is the Cysteine persulfide intermediate of the active site.

Belongs to the FdhD family.

Its subcellular location is the cytoplasm. Required for formate dehydrogenase (FDH) activity. Acts as a sulfur carrier protein that transfers sulfur from IscS to the molybdenum cofactor prior to its insertion into FDH. This Staphylococcus aureus (strain NCTC 8325 / PS 47) protein is Sulfur carrier protein FdhD.